The primary structure comprises 146 residues: Flagellar assembly factor FliW (146 aa).

Belongs to the FliW family. Interacts with translational regulator CsrA and flagellin(s).

Its subcellular location is the cytoplasm. Acts as an anti-CsrA protein, binds CsrA and prevents it from repressing translation of its target genes, one of which is flagellin. Binds to flagellin and participates in the assembly of the flagellum. The chain is Flagellar assembly factor FliW from Shouchella clausii (strain KSM-K16) (Alkalihalobacillus clausii).